The chain runs to 778 residues: Zinc finger protein 749 (778 aa).

A KRAB domain is found at 8–101; the sequence is MVFEDVAIYF…ILKDILHLAE (94 aa). The C2H2-type 1; degenerate zinc-finger motif lies at 152–174; it reads FTCTQGGKDFTASSDLLQQQVLN. The segment at 196–218 adopts a C2H2-type 2; degenerate zinc-finger fold; it reads FNSSQGGKDFCHQHGLFEHQKTH. The segment at 224–246 adopts a C2H2-type 3; degenerate zinc-finger fold; the sequence is YEFSECGELFRYNSNLIKYQQNH. A C2H2-type 4; degenerate zinc finger spans residues 252–274; that stretch reads YEGTEYGKTFIRKSNLVQHQKIH. 6 C2H2-type zinc fingers span residues 298 to 320, 326 to 348, 354 to 376, 382 to 404, 410 to 432, and 438 to 460; these read YECT…QKTH, YECN…QKVH, YECS…QRVH, FECS…QRVH, YKCS…LKIH, and YECT…QKIH. Lys466 is modified (N6-acetyllysine). 2 C2H2-type zinc fingers span residues 483–505 and 511–533; these read YTCS…QKIH and YECT…EKIH. Lys539 carries the post-translational modification N6-acetyllysine. The C2H2-type 13; degenerate zinc-finger motif lies at 556–578; the sequence is YVCSECGKAFLTQAHLDGHQKIQ. 3 consecutive C2H2-type zinc fingers follow at residues 584 to 606, 612 to 634, and 640 to 662; these read YECN…QRIH, YKCS…QKVH, and YECS…QRVH. Residues 668–690 form a C2H2-type 17; atypical zinc finger; that stretch reads YECSNCGKFLRYRSTFIKHHKVC. The C2H2-type 18 zinc finger occupies 696 to 718; it reads HECSKCRELFRTKSSLIIHQQSH. The C2H2-type 19; degenerate zinc-finger motif lies at 751 to 773; sequence YECGESSKVFKYNSSLIKHQIIH. Glycyl lysine isopeptide (Lys-Gly) (interchain with G-Cter in SUMO2) cross-links involve residues Lys761 and Lys768.

This sequence belongs to the krueppel C2H2-type zinc-finger protein family.

It localises to the nucleus. Its function is as follows. May be involved in transcriptional regulation. This Homo sapiens (Human) protein is Zinc finger protein 749 (ZNF749).